A 395-amino-acid chain; its full sequence is ATP phosphoribosyltransferase regulatory subunit (395 aa).

The protein belongs to the class-II aminoacyl-tRNA synthetase family. HisZ subfamily. As to quaternary structure, heteromultimer composed of HisG and HisZ subunits.

The protein localises to the cytoplasm. The protein operates within amino-acid biosynthesis; L-histidine biosynthesis; L-histidine from 5-phospho-alpha-D-ribose 1-diphosphate: step 1/9. In terms of biological role, required for the first step of histidine biosynthesis. May allow the feedback regulation of ATP phosphoribosyltransferase activity by histidine. The sequence is that of ATP phosphoribosyltransferase regulatory subunit from Pseudomonas savastanoi pv. phaseolicola (strain 1448A / Race 6) (Pseudomonas syringae pv. phaseolicola (strain 1448A / Race 6)).